The primary structure comprises 520 residues: MNTTVSNQTPRIRIFDTTLRDGEQSPGCSMTPQQKLVMARALDELGVDIIETGFPASSHSDREAVAMMGRELRRPTLAVLSRCLQADIETSAKALETAANPRLHVFLSTSPLHREHKLRMSREQVLESVHRHVTLARGYVDDVEFSAEDATRTEEDFLAEVTRVAIAAGATTINLPDTVGFTTPEEIRGMFSRLIASVEGADKVIFSAHCHNDLGLAVANSLAAIEGGARQVECTINGIGERAGNCALEEITMALKVRGAFYNIDSAINTPRIVSTSQLLQRLVGMPVQRNKAVVGGNAFAHESGIHQHGMLRHRGTYEIMRPEDVGWESSQMVLGRHSGRAAVEQRLRALGYLLEEEEVKLVFEQFKALCEKQRVVTDADLQALMQDATVQEGYRLASMTISDVGSRANALVELSDPEGNRVAETAQGNGPVDALFGALASATGVKLELDSYQVHSVGIGADARGEASLSVRHDGVEYEGTGTSKDIIEASALAWLDVANRLLRQRERGVVAGKTAAVA.

The Pyruvate carboxyltransferase domain maps to 12 to 274; it reads IRIFDTTLRD…DSAINTPRIV (263 aa). Mn(2+) is bound by residues aspartate 21, histidine 209, histidine 211, and asparagine 245. Residues 396–520 are regulatory domain; the sequence is RLASMTISDV…VVAGKTAAVA (125 aa).

This sequence belongs to the alpha-IPM synthase/homocitrate synthase family. LeuA type 1 subfamily. As to quaternary structure, homodimer. Requires Mn(2+) as cofactor.

It localises to the cytoplasm. It catalyses the reaction 3-methyl-2-oxobutanoate + acetyl-CoA + H2O = (2S)-2-isopropylmalate + CoA + H(+). The protein operates within amino-acid biosynthesis; L-leucine biosynthesis; L-leucine from 3-methyl-2-oxobutanoate: step 1/4. Catalyzes the condensation of the acetyl group of acetyl-CoA with 3-methyl-2-oxobutanoate (2-ketoisovalerate) to form 3-carboxy-3-hydroxy-4-methylpentanoate (2-isopropylmalate). This is 2-isopropylmalate synthase from Xanthomonas axonopodis pv. citri (strain 306).